The chain runs to 206 residues: 21.9 kDa heat shock protein (206 aa).

A signal peptide spans 1 to 29; it reads MAAVAEREVLGMVAAVAAMVVMMAPPAAA. Residues 65-187 enclose the sHSP domain; the sequence is EPAAVALARC…GREPRVVAID (123 aa). The Cell attachment site signature appears at 94-96; that stretch reads RGD.

It belongs to the small heat shock protein (HSP20) family. In terms of assembly, may form oligomeric structures.

It is found in the endoplasmic reticulum. The protein is 21.9 kDa heat shock protein (HSP21.9) of Oryza sativa subsp. japonica (Rice).